Here is a 310-residue protein sequence, read N- to C-terminus: Protein-L-isoaspartate O-methyltransferase (310 aa).

Disordered regions lie at residues 1 to 44 (MSGE…DKPA) and 67 to 88 (AKPA…PAAP). Residues 14 to 29 (EDLKRAPRKSEGRPGE) are compositionally biased toward basic and acidic residues. Low complexity predominate over residues 32–44 (AAGAVPKAADKPA). Over residues 75-86 (PTAPKPALPKPA) the composition is skewed to pro residues. Ser-157 is a catalytic residue.

It belongs to the methyltransferase superfamily. L-isoaspartyl/D-aspartyl protein methyltransferase family.

Its subcellular location is the cytoplasm. The catalysed reaction is [protein]-L-isoaspartate + S-adenosyl-L-methionine = [protein]-L-isoaspartate alpha-methyl ester + S-adenosyl-L-homocysteine. Its function is as follows. Catalyzes the methyl esterification of L-isoaspartyl residues in peptides and proteins that result from spontaneous decomposition of normal L-aspartyl and L-asparaginyl residues. It plays a role in the repair and/or degradation of damaged proteins. This Burkholderia orbicola (strain MC0-3) protein is Protein-L-isoaspartate O-methyltransferase.